The following is an 81-amino-acid chain: Adipogenin (81 aa).

A helical membrane pass occupies residues 16–36; the sequence is FLASWLCLPVGLLLFLLIVWL.

Belongs to the adipogenin family.

It is found in the membrane. It localises to the nucleus. Functionally, plays a role in stimulating adipocyte differentiation and development. This chain is Adipogenin, found in Sus scrofa (Pig).